The primary structure comprises 350 residues: ATPase GET3 (350 aa).

Residue 26 to 33 (KGGVGKTT) participates in ATP binding. The active site involves aspartate 57. 2 residues coordinate ATP: glutamate 243 and asparagine 270. Positions 282 and 285 each coordinate Zn(2+).

It belongs to the arsA ATPase family. In terms of assembly, homodimer. Component of the Golgi to ER traffic (GET) complex, which is composed of GET1, GET2 and GET3. Within the complex, GET1 and GET2 form a heterotetramer which is stabilized by phosphatidylinositol binding and which binds to the GET3 homodimer. Interacts with the chloride channel protein GEF1.

It is found in the cytoplasm. The protein localises to the endoplasmic reticulum. Its subcellular location is the golgi apparatus. Functionally, ATPase required for the post-translational delivery of tail-anchored (TA) proteins to the endoplasmic reticulum. Recognizes and selectively binds the transmembrane domain of TA proteins in the cytosol. This complex then targets to the endoplasmic reticulum by membrane-bound receptors GET1 and GET2, where the tail-anchored protein is released for insertion. This process is regulated by ATP binding and hydrolysis. ATP binding drives the homodimer towards the closed dimer state, facilitating recognition of newly synthesized TA membrane proteins. ATP hydrolysis is required for insertion. Subsequently, the homodimer reverts towards the open dimer state, lowering its affinity for the GET1-GET2 receptor, and returning it to the cytosol to initiate a new round of targeting. Cooperates with the HDEL receptor ERD2 to mediate the ATP-dependent retrieval of resident ER proteins that contain a C-terminal H-D-E-L retention signal from the Golgi to the ER. Involved in low-level resistance to the oxyanions arsenite and arsenate, and in heat tolerance. The protein is ATPase GET3 of Candida albicans (strain SC5314 / ATCC MYA-2876) (Yeast).